The sequence spans 55 residues: MAKDKDVRPIIKLKSTAGTGFTYVTRKNRRNNPDRLVMKKYDPVVRKHVDFREER.

Belongs to the bacterial ribosomal protein bL33 family.

The polypeptide is Large ribosomal subunit protein bL33 (Kocuria rhizophila (strain ATCC 9341 / DSM 348 / NBRC 103217 / DC2201)).